The primary structure comprises 296 residues: Urease accessory protein UreD (296 aa).

It belongs to the UreD family. In terms of assembly, ureD, UreF and UreG form a complex that acts as a GTP-hydrolysis-dependent molecular chaperone, activating the urease apoprotein by helping to assemble the nickel containing metallocenter of UreC. The UreE protein probably delivers the nickel.

It localises to the cytoplasm. In terms of biological role, required for maturation of urease via the functional incorporation of the urease nickel metallocenter. This chain is Urease accessory protein UreD, found in Nitrosococcus oceani (strain ATCC 19707 / BCRC 17464 / JCM 30415 / NCIMB 11848 / C-107).